The primary structure comprises 648 residues: Protein teflon (648 aa).

The C2H2-type 1 zinc finger occupies 33–56 (LYCHFCRDLFTQLPEFLRHLQGAH). 2 disordered regions span residues 76–127 (SGEQ…GSQN) and 146–170 (EHIN…NSES). Polar residues predominate over residues 85 to 94 (VGHNSSSSDS). Positions 96–107 (GLAKSEDSRATE) are enriched in basic and acidic residues. The C2H2-type 2; degenerate zinc-finger motif lies at 598 to 620 (YFCKCCDDIFTLNEDYIRHLVSQ). The C2H2-type 3 zinc-finger motif lies at 624-647 (YQCTKCIKTFKYQGHYDKHMRTVH).

The protein belongs to the Teflon family.

It is found in the nucleus. It localises to the chromosome. Its function is as follows. Specifically required in males for proper segregation of autosomal bivalents at meiosis I. Expression is required in the male germ line prior to spermatocyte stage S4. May have a role as a bridging molecule maintaining adhesion to hold autosome bivalents together via heterochromatic connections. The polypeptide is Protein teflon (Drosophila yakuba (Fruit fly)).